Reading from the N-terminus, the 603-residue chain is NADPH-dependent diflavin oxidoreductase 1 (603 aa).

The 145-residue stretch at 8-152 (VLVLYGSETG…SFVRWTGRLY (145 aa)) folds into the Flavodoxin-like domain. Residues 14-19 (SETGNA), 61-64 (STTG), 99-108 (LGDSTYLKFN), and glutamate 134 each bind FMN. Residues 210–457 (PDGWTATLVG…RKPVLSPIHG (248 aa)) form the FAD-binding FR-type domain. FAD contacts are provided by residues arginine 358, 388–391 (RDFS), and 429–432 (GLCS). Residues threonine 472, 528-529 (SR), and 534-538 (KIYVQ) each bind NADP(+). Residue tryptophan 603 coordinates FAD.

It belongs to the NADPH-dependent diflavin oxidoreductase NDOR1 family. This sequence in the N-terminal section; belongs to the flavodoxin family. The protein in the C-terminal section; belongs to the flavoprotein pyridine nucleotide cytochrome reductase family. In terms of assembly, interacts with DRE2; as part of the cytosolic iron-sulfur (Fe-S) protein assembly (CIA) machinery. The cofactor is FAD. It depends on FMN as a cofactor.

It localises to the cytoplasm. Its subcellular location is the mitochondrion. The enzyme catalyses 2 oxidized [2Fe-2S]-[protein] + NADPH = 2 reduced [2Fe-2S]-[protein] + NADP(+) + H(+). Its function is as follows. NADPH-dependent reductase which is a central component of the cytosolic iron-sulfur (Fe-S) protein assembly (CIA) machinery. Transfers electrons from NADPH via its FAD and FMN prosthetic groups to the [2Fe-2S] cluster of DRE2, another key component of the CIA machinery. In turn, this reduced cluster provides electrons for assembly of cytosolic iron-sulfur cluster proteins. Positively controls H(2)O(2)-induced cell death. This Gibberella zeae (strain ATCC MYA-4620 / CBS 123657 / FGSC 9075 / NRRL 31084 / PH-1) (Wheat head blight fungus) protein is NADPH-dependent diflavin oxidoreductase 1.